A 113-amino-acid chain; its full sequence is MHELSLCQSAVEIIQRQAEQHDVKRVTAVWLEIGALSCVEESAVRFSFEIVCHGTVAQGCDLHIVYKPAQAWCWDCSQVVEIHQHDAQCPICHGERLRVDTGDSLIVKSIEVE.

The Ni(2+) site is built by histidine 2 and glutamate 3. 4 residues coordinate Zn(2+): cysteine 73, cysteine 76, cysteine 89, and cysteine 92.

This sequence belongs to the HypA/HybF family. HybF subfamily.

Its function is as follows. Involved in the maturation of [NiFe] hydrogenases. Required for nickel insertion into the metal center of the hydrogenase. This is Hydrogenase maturation factor HybF from Escherichia coli O6:H1 (strain CFT073 / ATCC 700928 / UPEC).